A 910-amino-acid chain; its full sequence is Leucine--tRNA ligase (910 aa).

A 'HIGH' region motif is present at residues 42–52; sequence PYPSGKLHMGH. Positions 668–672 match the 'KMSKS' region motif; that stretch reads KMSKS. An ATP-binding site is contributed by Lys-671.

It belongs to the class-I aminoacyl-tRNA synthetase family.

It is found in the cytoplasm. The enzyme catalyses tRNA(Leu) + L-leucine + ATP = L-leucyl-tRNA(Leu) + AMP + diphosphate. The polypeptide is Leucine--tRNA ligase (Neisseria meningitidis serogroup A / serotype 4A (strain DSM 15465 / Z2491)).